The chain runs to 223 residues: 3,4-dihydroxy-2-butanone 4-phosphate synthase (223 aa).

D-ribulose 5-phosphate-binding positions include 47–48 (RE), Asp52, 160–164 (RRGHT), and Glu184. Glu48 contributes to the Mg(2+) binding site. His163 lines the Mg(2+) pocket.

The protein belongs to the DHBP synthase family. Homodimer. Requires Mg(2+) as cofactor. Mn(2+) is required as a cofactor.

The catalysed reaction is D-ribulose 5-phosphate = (2S)-2-hydroxy-3-oxobutyl phosphate + formate + H(+). It participates in cofactor biosynthesis; riboflavin biosynthesis; 2-hydroxy-3-oxobutyl phosphate from D-ribulose 5-phosphate: step 1/1. Its function is as follows. Catalyzes the conversion of D-ribulose 5-phosphate to formate and 3,4-dihydroxy-2-butanone 4-phosphate. The protein is 3,4-dihydroxy-2-butanone 4-phosphate synthase of Cupriavidus pinatubonensis (strain JMP 134 / LMG 1197) (Cupriavidus necator (strain JMP 134)).